The chain runs to 517 residues: Shugoshin 1 (517 aa).

Residues 1–89 are a coiled coil; it reads MAKERCQKRS…DVILQLRKEC (89 aa). Residues 1–176 form a necessary for interaction with PPP2CA and PPP2R1A region; the sequence is MAKERCQKRS…DFDSGKVEST (176 aa). Disordered stretches follow at residues 107–136, 149–173, 267–317, and 334–427; these read QSEE…LSGK, PYQT…SGKV, PEQI…TLDG, and HPTP…QESP. A coiled-coil region spans residues 268-291; that stretch reads EQIESKHKRARKRRAEQRRTKQRC. Basic residues predominate over residues 273-302; it reads KHKRARKRRAEQRRTKQRCKSKSSLRSKGN. Residues 341–363 show a composition bias toward polar residues; sequence KMNNGCNKETDSSNSEVSDLECS. Basic and acidic residues predominate over residues 379-390; that stretch reads RLRDYRESERAV. Serine 426 carries the phosphoserine modification. The short motif at 441–445 is the PXVXL/I motif element; it reads PRVKI. The D-box signature appears at 447 to 455; that stretch reads KPSLPPKRR. At serine 497 the chain carries Phosphoserine; by NEK2.

It belongs to the shugoshin family. In terms of assembly, interacts with PPP2CA (or PPP2CB), PPP2R1B, PPP2R5A, PPP2R5B, PPP2R5C, PPP2R5D, PPP2R5E, SET, LRRC59, RBM10 (or RBM5), RPL10A, RPL28, RPL7, RPL7A and RPLP1. Interaction with protein phosphatase 2A occurs most probably through direct binding to the regulatory B56 subunits: PPP2R1B, PPP2R5A, PPP2R5B, PPP2R5C, PPP2R5D, PPP2R5E. Interacts with PPP2R1A and NEK2. Interacts with CDCA8. In terms of processing, ubiquitinated and degraded during mitotic exit by APC/C-Cdh1. Post-translationally, phosphorylation by NEK2 is essential for chromosome congression in mitosis and for the proper attachment of spindle microtubule to the kinetochore. Phosphorylated by PLK1 and AUKRB. Ubiquitously expressed in proliferating cells. Moderately expressed in the oocytes.

The protein localises to the nucleus. It localises to the chromosome. The protein resides in the centromere. Its subcellular location is the kinetochore. It is found in the cytoplasm. The protein localises to the cytoskeleton. It localises to the spindle pole. The protein resides in the microtubule organizing center. Its subcellular location is the centrosome. It is found in the nucleus speckle. Functionally, plays a central role in chromosome cohesion during mitosis by preventing premature dissociation of cohesin complex from centromeres after prophase, when most of cohesin complex dissociates from chromosomes arms. May act by preventing phosphorylation of the STAG2 subunit of cohesin complex at the centromere, ensuring cohesin persistence at centromere until cohesin cleavage by ESPL1/separase at anaphase. Essential for proper chromosome segregation during mitosis and this function requires interaction with PPP2R1A. Its phosphorylated form is necessary for chromosome congression and for the proper attachment of spindle microtubule to the kinetochore. Necessary for kinetochore localization of PLK1 and CENPF. May play a role in the tension sensing mechanism of the spindle-assembly checkpoint by regulating PLK1 kinetochore affinity. Involved in centromeric enrichment of AUKRB in prometaphase. This Mus musculus (Mouse) protein is Shugoshin 1.